A 131-amino-acid chain; its full sequence is MSEQKPEQDVNKKIEELEKKVQELQEQLEKTKQAVKTVASILDNHLKGQWTLEDVKIAITHINEMVQLLTQSGIIRPGSEGSGNWLQMMLAQQFMQQKQAQQSQDVQIEPLKKKNKKKLKKFLDEEAEEEE.

Positions 4–44 form a coiled coil; it reads QKPEQDVNKKIEELEKKVQELQEQLEKTKQAVKTVASILDN.

This is an uncharacterized protein from Sulfolobus islandicus filamentous virus (isolate Iceland/Hveragerdi) (SIFV).